Consider the following 269-residue polypeptide: Serine/arginine-rich splicing factor 5 (269 aa).

One can recognise an RRM 1 domain in the interval 4–74 (CRVFIGRLNP…ERVTIEHARA (71 aa)). The disordered stretch occupies residues 73 to 105 (RARSRGGRGRGRYSDRFSSRRPRNDRRNAPPVR). Positions 74-83 (ARSRGGRGRG) are enriched in basic residues. S86 bears the Phosphoserine mark. The RRM 2 domain maps to 108–189 (NRLIVENLSS…SKRHRSRSRS (82 aa)). K167 bears the N6-acetyllysine mark. The segment at 174 to 269 (IKLIEGSKRH…SRSRSVDSGN (96 aa)) is disordered. Residues 181–226 (KRHRSRSRSRSRTRSSSRSRSRSRSRRSKSYSRSRSRSRSRSKSRS) are compositionally biased toward basic residues. S224, S226, S230, S247, and S250 each carry phosphoserine. Residues 239–251 (RGSSSRSKSPASV) show a composition bias toward low complexity.

This sequence belongs to the splicing factor SR family. As to quaternary structure, found in a pre-mRNA splicing complex with SRSF4/SFRS4, SRSF5/SFRS5, SNRNP70, SNRPA1, SRRM1 and SRRM2. Interacts with RBMY; the interaction inhibits SRSF5 pre-mRNA splicing. Interacts (via RS domain) with PHF5A (via N-terminus). Extensively phosphorylated on serine residues in the RS domain.

It localises to the nucleus. May be required for progression through G1 and entry into S phase of cell growth. May play a regulatory role in pre-mRNA splicing. Autoregulates its own expression. Plays a role in constitutive splicing and can modulate the selection of alternative splice sites. The polypeptide is Serine/arginine-rich splicing factor 5 (Srsf5) (Mus musculus (Mouse)).